Reading from the N-terminus, the 505-residue chain is MSQSNRVRDEVTLPLLQKTSHLKNHSSVLSVFLNEAISICKISYPLVLTGLFLYVRSFVSLSFLGGLGDATLAGGSLAAAFANITGYSLFSGLTMGVESICSQAFGARRYNYVCASVKRGIILLLVTSLPVTLLWMNMEKILLILKQDKKLASEAHIFLLYSVPDLVAQSFLHPLRVYLRTQSKTLPLSICTVIASFLHLPITFFLVSYLGLGIKGIALSGVVSNFNLVAFLFLYICFFEDKLSVNEDEKITEETCEDSVREWKKLLCLAIPSCISVCLEWWCYEIMILLCGFLLDPKASVASMGILIQITSLVYIFPHSLSLGVSTRVGNELGSNQPKRARRAAIVGLGLSIALGFTAFAFTVSVRNTWAMFFTDDKEIMKLTAMALPIVGLCELGNCPQTTGCGVLRGSARPKIGANINGVAFYAVGIPVGAVLAFWFGFGFKGLWLGMLAAQITCVIGMMAATCRTDWELEAERAKVLTTAVDCGSSDDDAKEDMEAGMVDK.

Helical transmembrane passes span 46-66 (LVLT…FLGG), 78-98 (AAAF…MGVE), 121-141 (IILL…MEKI), 155-175 (AHIF…LHPL), 194-214 (IASF…GLGI), 219-239 (LSGV…ICFF), 275-295 (ISVC…GFLL), 305-325 (GILI…SLGV), 344-364 (AAIV…AFTV), 380-400 (IMKL…GNCP), 424-444 (AFYA…GFGF), and 446-466 (GLWL…MAAT).

The protein belongs to the multi antimicrobial extrusion (MATE) (TC 2.A.66.1) family. Preferentially expressed in rosette leaves. Detected mainly in the vascular tissues and guard cells. Mostly detected at reproductive stages in young anthers, in mature pollens and during pollen germination on the pistil. Also expressed in developing seeds.

The protein localises to the cell membrane. The protein resides in the late endosome membrane. Functionally, functions as a multidrug and toxin extrusion transporter in the export of abscisic acid (ABA) in guard cells. Plays a role in ABA-mediated growth inhibition and responses to drought conditions. May act as a negative regulator of hypocotyl cell elongation in the light. In Arabidopsis thaliana (Mouse-ear cress), this protein is Protein DETOXIFICATION 50.